Consider the following 64-residue polypeptide: Large ribosomal subunit protein bL28 (64 aa).

Residues 1 to 23 (MARKDQISHRGPLSGNNRSHALN) are disordered.

Belongs to the bacterial ribosomal protein bL28 family.

This Mesomycoplasma hyopneumoniae (strain J / ATCC 25934 / NCTC 10110) (Mycoplasma hyopneumoniae) protein is Large ribosomal subunit protein bL28.